Here is a 221-residue protein sequence, read N- to C-terminus: MARKKLMRFKWNEEVHNLFQPEKENYKAYKGKWHEYFKNDNPVILEVGCGRAEYTTGLAALFPENNYIGLDIKGARLWKGSSLSIETGLTNTAFIRTKLQNLEEFFEPGEVKGIWITFPDPKPRESEAKLRLSGLRFMNIYRRLMPAGGKVFFKTDNRVLFDHTLEVLTDQTLKIKDLVFTHDLYQSPLLAEHYGIQTTYEKTYLNQGVQINYLKFEFLPL.

3 residues coordinate S-adenosyl-L-methionine: glutamate 46, aspartate 71, and aspartate 120. The active site involves aspartate 120. Aspartate 156 is a binding site for substrate.

Belongs to the class I-like SAM-binding methyltransferase superfamily. TrmB family.

The catalysed reaction is guanosine(46) in tRNA + S-adenosyl-L-methionine = N(7)-methylguanosine(46) in tRNA + S-adenosyl-L-homocysteine. It functions in the pathway tRNA modification; N(7)-methylguanine-tRNA biosynthesis. Catalyzes the formation of N(7)-methylguanine at position 46 (m7G46) in tRNA. The protein is tRNA (guanine-N(7)-)-methyltransferase of Cytophaga hutchinsonii (strain ATCC 33406 / DSM 1761 / CIP 103989 / NBRC 15051 / NCIMB 9469 / D465).